A 632-amino-acid polypeptide reads, in one-letter code: tRNA uridine 5-carboxymethylaminomethyl modification enzyme MnmG (632 aa).

13-18 provides a ligand contact to FAD; the sequence is GGGHAG. NAD(+) is bound at residue 273–287; it reads GPRYCPSIEDKIHRF.

This sequence belongs to the MnmG family. As to quaternary structure, homodimer. Heterotetramer of two MnmE and two MnmG subunits. The cofactor is FAD.

The protein localises to the cytoplasm. In terms of biological role, NAD-binding protein involved in the addition of a carboxymethylaminomethyl (cmnm) group at the wobble position (U34) of certain tRNAs, forming tRNA-cmnm(5)s(2)U34. In Psychrobacter cryohalolentis (strain ATCC BAA-1226 / DSM 17306 / VKM B-2378 / K5), this protein is tRNA uridine 5-carboxymethylaminomethyl modification enzyme MnmG.